The primary structure comprises 952 residues: Bifunctional ent-kaurene synthase (952 aa).

Residues 328-331 (DVDD) carry the DXDD B-type cyclization motif motif. Mg(2+) contacts are provided by Asp668, Glu672, Asn848, Asp849, Ser852, and Asp856. A DEXXE A-type cyclization motif motif is present at residues 668 to 672 (DEYME).

It belongs to the terpene synthase family. It depends on Mg(2+) as a cofactor.

The enzyme catalyses ent-copalyl diphosphate = ent-kaur-16-ene + diphosphate. The catalysed reaction is (2E,6E,10E)-geranylgeranyl diphosphate = ent-copalyl diphosphate. It participates in plant hormone biosynthesis; gibberellin biosynthesis. Bifunctional ent-kaurene synthase; part of the gene cluster that mediates the biosynthesis of gibberellins (GAs), diterpenoids that may provide a selective advantage during infection of the preferred host plant, rice. Gibberellins (GAs) are diterpenoids and are synthesized via the mevalonate pathway. Biosynthesis of the major metabolite GA3 (gibberellic acid) from geranylgeranyl diphosphate (GGPP) requires 13 steps. The GGPP produced by the geranylgeranyl diphosphate synthase GGS2 is converted to ent-kaurene via ent-copalyldiphosphate in a two-step cyclization reaction performed by the bifunctional ent-copalyl diphosphate synthase/ent-kaurene synthase enzyme (CPS/KS). Ent-Kaurene is metabolized to GAs by a series of oxidation reactions catalyzed by cytochrome P450 monooxygenases. Cytochrome P450 monooxygenase P450-4 is an ent-kaurene oxidase that catalyzes the three oxidation steps between ent-kaurene and ent-kaurenoic acid. The highly multifunctional cytochrome P450 monooxygenase P450-1 then catalyzes four steps involving oxidation at two carbon atoms, in the main pathway from ent-kaurenoic acid to GA14 via GA12-aldehyde as well as producing kaurenolides and fujenoic acids as by-products. The cytochrome P450 monooxygenase P450-2 then converts GA14 to GA4 by removal of C-20. GA4 is further converted to GA7 by the GA4 desaturase DES via 1,2-desaturation before cytochrome P450 monooxygenase P450-3, a 13-hydroxylase, hydroxylates GA7 to GA3, the final product of the GA-biosynthetic pathway. This is Bifunctional ent-kaurene synthase from Gibberella fujikuroi (strain CBS 195.34 / IMI 58289 / NRRL A-6831) (Bakanae and foot rot disease fungus).